A 67-amino-acid chain; its full sequence is Large ribosomal subunit protein uL29 (67 aa).

The protein belongs to the universal ribosomal protein uL29 family.

This chain is Large ribosomal subunit protein uL29, found in Alkaliphilus metalliredigens (strain QYMF).